The following is a 212-amino-acid chain: Deoxyribose-phosphate aldolase (212 aa).

D89 functions as the Proton donor/acceptor in the catalytic mechanism. K151 (schiff-base intermediate with acetaldehyde) is an active-site residue. K180 functions as the Proton donor/acceptor in the catalytic mechanism.

It belongs to the DeoC/FbaB aldolase family. DeoC type 1 subfamily.

It is found in the cytoplasm. The catalysed reaction is 2-deoxy-D-ribose 5-phosphate = D-glyceraldehyde 3-phosphate + acetaldehyde. It participates in carbohydrate degradation; 2-deoxy-D-ribose 1-phosphate degradation; D-glyceraldehyde 3-phosphate and acetaldehyde from 2-deoxy-alpha-D-ribose 1-phosphate: step 2/2. Its function is as follows. Catalyzes a reversible aldol reaction between acetaldehyde and D-glyceraldehyde 3-phosphate to generate 2-deoxy-D-ribose 5-phosphate. In Clostridium botulinum (strain Kyoto / Type A2), this protein is Deoxyribose-phosphate aldolase.